Here is a 241-residue protein sequence, read N- to C-terminus: Tumor necrosis factor ligand superfamily member 13 (241 aa).

Positions M1–R95 are excised as a propeptide. The THD domain maps to S107 to L241. N-linked (GlcNAc...) asparagine glycosylation occurs at N115. A disulfide bridge links C187 with C202.

Belongs to the tumor necrosis factor family. In terms of assembly, homotrimer. In terms of processing, the soluble form derives from the membrane form by proteolytic processing.

The protein resides in the secreted. In terms of biological role, cytokine that binds to TNFRSF13B/TACI and to TNFRSF17/BCMA. Plays a role in the regulation of tumor cell growth. May be involved in monocyte/macrophage-mediated immunological processes. The sequence is that of Tumor necrosis factor ligand superfamily member 13 (Tnfsf13) from Mus musculus (Mouse).